We begin with the raw amino-acid sequence, 180 residues long: MKMLLLLCLGLTLVCVHAEEASSTGRNFNVEKINGEWHTIILASDKREKIEDNGNFRLFLEQIHVLENSLVLKFHTVRDEECSELSMVADKTEKAGEYSVTYDGFNTFTIPKTDYDNFLMAHLINEKDGETFQLMGLYGREPDLSSDIKERFAQLCEKHGILRENIIDLSNANRCLQARE.

A signal peptide spans 1–18 (MKMLLLLCLGLTLVCVHA). Cys-82 and Cys-175 are disulfide-bonded.

The protein belongs to the calycin superfamily. Lipocalin family. As to expression, abundant in the urine of adult male mice but absent from that of females.

Its subcellular location is the secreted. In terms of biological role, binds pheromones that are released from drying urine of males. These pheromones affect the sexual behavior of females. This chain is Major urinary protein 1 (Mup1), found in Mus musculus (Mouse).